A 187-amino-acid polypeptide reads, in one-letter code: MDKYSINQFKNGLKLMLDSNPCSILNNEIVKPGKGQAFNRVKFKDLITGKTLIKTFKSGEFLEGADVMELDLQYLYNDGNAWNFMDPHSFEQYIIDGITVSSVKGYLVEQDICIVTLWNDNPISITPPNHVILEVFDTDPGLKGDTIGASGKPATMNTGVVLQVPLFVSIGDKVKVDTRINEYAGRA.

Position 34 is an N6-(3,6-diaminohexanoyl)-5-hydroxylysine (Lys34).

It belongs to the elongation factor P family. Post-translationally, may be beta-lysylated on the epsilon-amino group of Lys-34 by the combined action of EpmA and EpmB, and then hydroxylated on the C5 position of the same residue by EpmC (if this protein is present). Lysylation is critical for the stimulatory effect of EF-P on peptide-bond formation. The lysylation moiety may extend toward the peptidyltransferase center and stabilize the terminal 3-CCA end of the tRNA. Hydroxylation of the C5 position on Lys-34 may allow additional potential stabilizing hydrogen-bond interactions with the P-tRNA.

The protein resides in the cytoplasm. The protein operates within protein biosynthesis; polypeptide chain elongation. Functionally, involved in peptide bond synthesis. Alleviates ribosome stalling that occurs when 3 or more consecutive Pro residues or the sequence PPG is present in a protein, possibly by augmenting the peptidyl transferase activity of the ribosome. Modification of Lys-34 is required for alleviation. This is Elongation factor P from Vesicomyosocius okutanii subsp. Calyptogena okutanii (strain HA).